The primary structure comprises 443 residues: KH domain-containing, RNA-binding, signal transduction-associated protein 1 (443 aa).

Residues methionine 1–alanine 94 form a disordered region. 2 positions are modified to phosphoserine: serine 18 and serine 20. Lysine 21 carries the post-translational modification N6-acetyllysine. The residue at position 29 (serine 29) is a Phosphoserine. Threonine 33 is subject to Phosphothreonine. Residues arginine 45 and arginine 52 each carry the asymmetric dimethylarginine; by PRMT1 modification. Position 58 is a phosphoserine; by MAPK1 (serine 58). A compositionally biased stretch (pro residues) spans threonine 61 to proline 72. Phosphothreonine; by MAPK1 is present on residues threonine 71 and threonine 84. A compositionally biased stretch (low complexity) spans serine 81 to alanine 94. Residues lysine 96 and lysine 102 each participate in a glycyl lysine isopeptide (Lys-Gly) (interchain with G-Cter in SUMO2) cross-link. The involved in homodimerization stretch occupies residues glutamate 100–methionine 260. Serine 113 carries the phosphoserine modification. Lysine 139 participates in a covalent cross-link: Glycyl lysine isopeptide (Lys-Gly) (interchain with G-Cter in SUMO2). Phosphoserine is present on serine 150. Residues asparagine 171–valine 197 form the KH domain. Lysine 175 bears the N6-acetyllysine; alternate mark. Lysine 175 is covalently cross-linked (Glycyl lysine isopeptide (Lys-Gly) (interchain with G-Cter in SUMO2); alternate). Threonine 183 carries the post-translational modification Phosphothreonine. The segment at proline 280–threonine 317 is disordered. 3 positions are modified to omega-N-methylarginine: arginine 282, arginine 284, and arginine 291. Low complexity predominate over residues glycine 283–alanine 293. Position 304 is an asymmetric dimethylarginine (arginine 304). The segment covering glycine 307 to glycine 316 has biased composition (low complexity). An omega-N-methylarginine; by PRMT1 mark is found at arginine 310 and arginine 315. Arginine 320 is subject to Dimethylated arginine; alternate. An Omega-N-methylarginine; by PRMT1; alternate modification is found at arginine 320. Residue arginine 325 is modified to Omega-N-methylarginine; by PRMT1. The disordered stretch occupies residues glycine 326–proline 345. Residues arginine 331 and arginine 340 each carry the dimethylated arginine; alternate modification. Omega-N-methylarginine; by PRMT1; alternate occurs at positions 331 and 340. At arginine 331 the chain carries Asymmetric dimethylarginine; alternate. The interaction with HNRNPA1 stretch occupies residues glycine 351 to tyrosine 443. Tyrosine 387 is modified (phosphotyrosine). Residue serine 390 is modified to Phosphoserine. Positions glycine 400 to arginine 420 are interaction with ZBTB7A. Residues tyrosine 411–tyrosine 443 are disordered. Residue lysine 432 forms a Glycyl lysine isopeptide (Lys-Gly) (interchain with G-Cter in SUMO2) linkage. Positions alanine 434 to tyrosine 443 are enriched in basic and acidic residues. Phosphotyrosine; by PTK6 is present on residues tyrosine 435, tyrosine 440, and tyrosine 443.

It belongs to the KHDRBS family. Self-associates to form homooligomers when bound to RNA, oligomerization appears to be limited when binding to proteins. Forms a trimeric complex in the nucleus consisting of BANP, HDAC6 and KHDRBS1/SAM68; HDAC6 keeps KHDRBS1 in a deacetylated state which inhibits the inclusion of CD44 alternate exons. The complex is disrupted by MAPK1/MAPK3-mediated phosphorylation of BANP which results in BANP export to the cytoplasm. This facilitates acetylation of KHDRBS1 and CD44 variant exon inclusion. Interacts with KHDRBS3/SLIM-2 and KHDRBS2/SLIM-1; heterooligomer formation of KHDRBS family proteins may modulate RNA substrate specificity. Interacts with RASA1, FYN, GRB2, PLCG1, SRC, CBP and PRMT1. Interacts with PTK6 (via SH3 and SH2 domains). Forms a complex with ILF2, ILF3, YLPM1, RBMX, NCOA5 and PPP1CA. Binds WBP4/FBP21 (via WW domains), FNBP4/FBP30 (via WW domains). Interacts (via Arg/Gly-rich-flanked Pro-rich regions) with FYN (via the SH3 domain). Interacts with APC, HNRNPA1. Interacts with the non-receptor tyrosine kinase SRMS; the interaction leads to phosphorylation of KHDRBS1. Interacts with ZBTB7A; negatively regulates KHDRBS1 splicing activity toward BCL2L1. In terms of processing, tyrosine phosphorylated by several non-receptor tyrosine kinases including LCK, FYN and JAK3. Also tyrosine phosphorylated by the non-receptor tyrosine kinase SRMS in an EGF-dependent manner. Phosphorylation by PTK6 negatively regulates its RNA binding ability. Phosphorylation by PTK6 at Tyr-440 dictates the nuclear localization of KHDRBS1. Phosphorylation by MAPK1 at Ser-58, Thr-71 and Thr-84 regulates CD44 alternative splicing by promoting CD44 exon v5 inclusion. Post-translationally, acetylated. Positively correlates with ability to bind RNA. Deacetylated by HDAC6; this regulates alternative splicing by inhibiting the inclusion of CD44 alternate exons. Arginine methylation is required for nuclear localization. Inhibits interaction with Src-like SH3 domains, but not interaction with WW domains of WBP4/FBP21 and FNBP4/FBP30. As to expression, in adult cerebellum expressed in most neuronal cell populations, specifically in cerebellar granule cells of the internal granular layer, ROR(alpha)-positive Purkinje cells, internal granular layer and molecular layer interneurons (at protein level).

Its subcellular location is the nucleus. It is found in the cytoplasm. It localises to the membrane. Functionally, recruited and tyrosine phosphorylated by several receptor systems, for example the T-cell, leptin and insulin receptors. Once phosphorylated, functions as an adapter protein in signal transduction cascades by binding to SH2 and SH3 domain-containing proteins. Role in G2-M progression in the cell cycle. Represses CBP-dependent transcriptional activation apparently by competing with other nuclear factors for binding to CBP. Also acts as a putative regulator of mRNA stability and/or translation rates and mediates mRNA nuclear export. Positively regulates the association of constitutive transport element (CTE)-containing mRNA with large polyribosomes and translation initiation. May not be involved in the nucleocytoplasmic export of unspliced (CTE)-containing RNA species. RNA-binding protein that plays a role in the regulation of alternative splicing and influences mRNA splice site selection and exon inclusion. Binds to RNA containing 5'-[AU]UAA-3' as a bipartite motif spaced by more than 15 nucleotides. Binds poly(A). In cooperation with HNRNPA1 modulates alternative splicing of BCL2L1 by promoting splicing toward isoform Bcl-X(S), and of SMN1. Can regulate CD44 alternative splicing in a Ras pathway-dependent manner. Can regulate alternative splicing of NRXN1 and NRXN3 in the laminin G-like domain 6 containing the evolutionary conserved neurexin alternative spliced segment 4 (AS4) involved in neurexin selective targeting to postsynaptic partners. In a neuronal activity-dependent manner cooperates synergistically with KHDRBS2/SLIM-1 in regulation of NRXN1 exon skipping at AS4. The cooperation with KHDRBS2/SLIM-1 is antagonistic for regulation of NXRN3 alternative splicing at AS4. This chain is KH domain-containing, RNA-binding, signal transduction-associated protein 1, found in Mus musculus (Mouse).